Here is a 62-residue protein sequence, read N- to C-terminus: Pelophylaxin-4 (62 aa).

Residues 1–22 (MLTLKKSMLLIFFLGTINFSLC) form the signal peptide. Positions 23-45 (EQERNADEEERRDEPEERDVEVQ) are excised as a propeptide. Residue Leu60 is modified to Leucine amide. A propeptide is located at residue Gly61.

Expressed by the skin glands.

The protein localises to the secreted. In terms of biological role, antimicrobial peptide. The protein is Pelophylaxin-4 of Pelophylax fukienensis (Fukien gold-striped pond frog).